The sequence spans 1072 residues: DNA-directed RNA polymerase subunit beta (1072 aa).

Belongs to the RNA polymerase beta chain family. In plastids the minimal PEP RNA polymerase catalytic core is composed of four subunits: alpha, beta, beta', and beta''. When a (nuclear-encoded) sigma factor is associated with the core the holoenzyme is formed, which can initiate transcription.

The protein localises to the plastid. It localises to the chloroplast. The enzyme catalyses RNA(n) + a ribonucleoside 5'-triphosphate = RNA(n+1) + diphosphate. Functionally, DNA-dependent RNA polymerase catalyzes the transcription of DNA into RNA using the four ribonucleoside triphosphates as substrates. In Arabidopsis thaliana (Mouse-ear cress), this protein is DNA-directed RNA polymerase subunit beta.